We begin with the raw amino-acid sequence, 870 residues long: Leucine--tRNA ligase (870 aa).

The short motif at 43–53 (PYPSGRLHMGH) is the 'HIGH' region element. The short motif at 626–630 (KMSKS) is the 'KMSKS' region element. Position 629 (Lys-629) interacts with ATP.

It belongs to the class-I aminoacyl-tRNA synthetase family.

It localises to the cytoplasm. It catalyses the reaction tRNA(Leu) + L-leucine + ATP = L-leucyl-tRNA(Leu) + AMP + diphosphate. This Pseudoalteromonas atlantica (strain T6c / ATCC BAA-1087) protein is Leucine--tRNA ligase.